Consider the following 217-residue polypeptide: Ribonuclease T (217 aa).

In terms of domain architecture, Exonuclease spans 20 to 195 (VVVDVETAGL…YDTERTAMLF (176 aa)). Aspartate 23, glutamate 25, histidine 182, and aspartate 187 together coordinate Mg(2+). Catalysis depends on histidine 182, which acts as the Proton donor/acceptor.

It belongs to the RNase T family. Homodimer. Mg(2+) is required as a cofactor.

Its function is as follows. Trims short 3' overhangs of a variety of RNA species, leaving a one or two nucleotide 3' overhang. Responsible for the end-turnover of tRNA: specifically removes the terminal AMP residue from uncharged tRNA (tRNA-C-C-A). Also appears to be involved in tRNA biosynthesis. The protein is Ribonuclease T of Blochmanniella pennsylvanica (strain BPEN).